The following is a 482-amino-acid chain: Altronate oxidoreductase (482 aa).

I18 to A29 contacts NAD(+).

This sequence belongs to the mannitol dehydrogenase family. UxaB subfamily.

The enzyme catalyses D-altronate + NAD(+) = keto-D-tagaturonate + NADH + H(+). The protein operates within carbohydrate metabolism; pentose and glucuronate interconversion. The sequence is that of Altronate oxidoreductase from Shigella sonnei (strain Ss046).